The sequence spans 153 residues: Insulin-like growth factor 1.S (153 aa).

Cystine bridges form between Cys-29–Cys-38, Cys-54–Cys-96, Cys-66–Cys-109, and Cys-100–Cys-109. The b stretch occupies residues 49 to 77 (GPETLCGAELVDTLQFVCGDRGFYFSKPT). A c region spans residues 78–89 (GYGSNNRRSHHR). The interval 90 to 110 (GIVDECCFQSCDFRRLEMYCA) is a. Residues 111–118 (PAKQAKSA) are d. The propeptide at 119-153 (RSVRTQRHTDMPKAQKEVHPKNTSRGNTGSRGFRM) is e peptide. The disordered stretch occupies residues 119-153 (RSVRTQRHTDMPKAQKEVHPKNTSRGNTGSRGFRM). A compositionally biased stretch (basic and acidic residues) spans 125 to 138 (RHTDMPKAQKEVHP). Over residues 139 to 153 (KNTSRGNTGSRGFRM) the composition is skewed to polar residues.

Belongs to the insulin family. As to expression, expressed in adult liver, lung, heart, kidney and peritoneal fat.

It is found in the secreted. Functionally, the insulin-like growth factors, isolated from plasma, are structurally and functionally related to insulin but have a much higher growth-promoting activity. Promotes head development by inhibiting Wnt signaling during embryogenesis. Acts as a ligand for IGF1R. Binds to the alpha subunit of IGF1R, leading to the activation of the intrinsic tyrosine kinase activity which autophosphorylates tyrosine residues in the beta subunit thus initiatiating a cascade of down-stream signaling events leading to activation of the PI3K-AKT/PKB and the Ras-MAPK pathways. Binds to integrins. Its binding to integrins and subsequent ternary complex formation with integrins and IGFR1 are essential for IGF1 signaling. The chain is Insulin-like growth factor 1.S from Xenopus laevis (African clawed frog).